Reading from the N-terminus, the 271-residue chain is Thiazole synthase (271 aa).

The Schiff-base intermediate with DXP role is filled by Lys95. Residues Gly156, 182 to 183, and 204 to 205 contribute to the 1-deoxy-D-xylulose 5-phosphate site; these read AG and NT.

The protein belongs to the ThiG family. As to quaternary structure, homotetramer. Forms heterodimers with either ThiH or ThiS.

The protein resides in the cytoplasm. The catalysed reaction is [ThiS sulfur-carrier protein]-C-terminal-Gly-aminoethanethioate + 2-iminoacetate + 1-deoxy-D-xylulose 5-phosphate = [ThiS sulfur-carrier protein]-C-terminal Gly-Gly + 2-[(2R,5Z)-2-carboxy-4-methylthiazol-5(2H)-ylidene]ethyl phosphate + 2 H2O + H(+). It participates in cofactor biosynthesis; thiamine diphosphate biosynthesis. Functionally, catalyzes the rearrangement of 1-deoxy-D-xylulose 5-phosphate (DXP) to produce the thiazole phosphate moiety of thiamine. Sulfur is provided by the thiocarboxylate moiety of the carrier protein ThiS. In vitro, sulfur can be provided by H(2)S. This Yersinia pseudotuberculosis serotype O:1b (strain IP 31758) protein is Thiazole synthase.